The following is a 953-amino-acid chain: Leucine-rich repeat receptor protein kinase HPCA1 (953 aa).

The first 23 residues, 1–23 (MSSRTGASLLLILFFFQICSVSA), serve as a signal peptide directing secretion. Over 24–558 (LTNGLDASAL…EVSSKSSNKS (535 aa)) the chain is Extracellular. LRR repeat units follow at residues 64–88 (NDRV…ISFL), 89–113 (SELR…IGNL), 115–137 (KLRN…IGTL), 138–162 (KELI…GLLS), 164–187 (LYWF…TSAP), and 192–216 (LLQT…LFSS). N-linked (GlcNAc...) asparagine glycosylation occurs at asparagine 182. The N-linked (GlcNAc...) asparagine glycan is linked to asparagine 217. LRR repeat units follow at residues 218–241 (MSLI…LSLV), 242–265 (KTLT…LNNL), 266–290 (TNLN…SLTS), 292–311 (YTLD…SWIS), 313–337 (LPSL…FFSP), 339–361 (QLQT…TDVS), and 362–384 (SQLE…ANKV). N-linked (GlcNAc...) asparagine glycans are attached at residues asparagine 264, asparagine 284, and asparagine 298. Residue asparagine 411 is glycosylated (N-linked (GlcNAc...) asparagine). Disulfide bonds link cysteine 421–cysteine 424 and cysteine 434–cysteine 436. Asparagine 456, asparagine 459, asparagine 510, and asparagine 523 each carry an N-linked (GlcNAc...) asparagine glycan. The helical transmembrane segment at 559-579 (ILIGAVVGVVVLLLLLTIAGI) threads the bilayer. Residues 580–953 (YALRQKKRAE…NFPASKLEPQ (374 aa)) lie on the Cytoplasmic side of the membrane. 2 positions are modified to phosphoserine: serine 606 and serine 607. In terms of domain architecture, Protein kinase spans 631–905 (FSEANDVGGG…EVVKEIENIM (275 aa)). Residues 637–645 (VGGGGYGKV) and lysine 659 each bind ATP. The active-site Proton acceptor is the aspartate 755. Residues threonine 786, threonine 789, and threonine 790 each carry the phosphothreonine modification. Residues 912–921 (PNSDSATSSR) show a composition bias toward polar residues. The disordered stretch occupies residues 912-953 (PNSDSATSSRTYEDAIKGSGDPYGSESFQYSGNFPASKLEPQ). Serine 942 carries the phosphoserine modification.

This sequence belongs to the protein kinase superfamily. Ser/Thr protein kinase family. In terms of processing, autophosphorylated at Ser-606, Ser-607, Thr-786, Thr-789, Thr-790 and Ser-942 in response to extracellular hydrogen peroxide. Widely expressed.

The protein localises to the cell membrane. It carries out the reaction L-seryl-[protein] + ATP = O-phospho-L-seryl-[protein] + ADP + H(+). The catalysed reaction is L-threonyl-[protein] + ATP = O-phospho-L-threonyl-[protein] + ADP + H(+). With respect to regulation, activated by autophosphorylation on serine and threonine residues in response to extracellular hydrogen peroxide. Functionally, leucine-rich repeat receptor protein kinase that acts as sensor of extracellular hydrogen peroxide. Required for intracellular calcium influx in response to extracellular hydrogen peroxide. Mediates hydrogen peroxide-induced activation of calcium channels in guard cells and is required for stomatal closure. This chain is Leucine-rich repeat receptor protein kinase HPCA1, found in Arabidopsis thaliana (Mouse-ear cress).